Consider the following 247-residue polypeptide: Proteasome subunit alpha type-7-B (247 aa).

It belongs to the peptidase T1A family. In terms of assembly, the 26S proteasome consists of a 20S proteasome core and two 19S regulatory subunits. The 20S proteasome core is composed of 28 subunits that are arranged in four stacked rings, resulting in a barrel-shaped structure. The two end rings are each formed by seven alpha subunits, and the two central rings are each formed by seven beta subunits. The catalytic chamber with the active sites is on the inside of the barrel. Post-translationally, phosphorylated in G2 phase.

It is found in the cytoplasm. The protein resides in the nucleus. Its function is as follows. The proteasome is a multicatalytic proteinase complex which is characterized by its ability to cleave peptides with Arg, Phe, Tyr, Leu, and Glu adjacent to the leaving group at neutral or slightly basic pH. The proteasome has an ATP-dependent proteolytic activity. This chain is Proteasome subunit alpha type-7-B (psma7-b), found in Xenopus laevis (African clawed frog).